A 469-amino-acid chain; its full sequence is Serine hydroxymethyltransferase, cytosolic (469 aa).

The residue at position 248 (lysine 248) is an N6-(pyridoxal phosphate)lysine.

This sequence belongs to the SHMT family. Homotetramer. Pyridoxal 5'-phosphate serves as cofactor.

The protein localises to the cytoplasm. It carries out the reaction (6R)-5,10-methylene-5,6,7,8-tetrahydrofolate + glycine + H2O = (6S)-5,6,7,8-tetrahydrofolate + L-serine. The protein operates within one-carbon metabolism; tetrahydrofolate interconversion. Functionally, interconversion of serine and glycine. In Candida glabrata (strain ATCC 2001 / BCRC 20586 / JCM 3761 / NBRC 0622 / NRRL Y-65 / CBS 138) (Yeast), this protein is Serine hydroxymethyltransferase, cytosolic (SHM2).